Here is a 101-residue protein sequence, read N- to C-terminus: Small ribosomal subunit protein uS14 (101 aa).

Positions 53–72 (RDAAAVRVRNRDSHDGRPRG) are disordered. Positions 61–70 (RNRDSHDGRP) are enriched in basic and acidic residues.

This sequence belongs to the universal ribosomal protein uS14 family. Part of the 30S ribosomal subunit. Contacts proteins S3 and S10.

Binds 16S rRNA, required for the assembly of 30S particles and may also be responsible for determining the conformation of the 16S rRNA at the A site. The polypeptide is Small ribosomal subunit protein uS14 (Corynebacterium glutamicum (strain R)).